The chain runs to 416 residues: Phosphatidylinositol 5-phosphate 4-kinase type-2 gamma (416 aa).

Positions 38–415 (ASDPMLSVFM…RFREFISNIF (378 aa)) constitute a PIPK domain.

Post-translationally, phosphorylated, phosphorylation is induced by EGF.

The protein resides in the endoplasmic reticulum. It is found in the cytoplasm. The catalysed reaction is a 1,2-diacyl-sn-glycero-3-phospho-(1D-myo-inositol-5-phosphate) + ATP = a 1,2-diacyl-sn-glycero-3-phospho-(1D-myo-inositol-4,5-bisphosphate) + ADP + H(+). The enzyme catalyses 1,2-dihexadecanoyl-sn-glycero-3-phospho-(1D-myo-inositol-5-phosphate) + ATP = 1,2-dihexadecanoyl-sn-glycero-3-phospho-(1D-myo-inositol-4,5-bisphosphate) + ADP + H(+). It carries out the reaction 1,2-dihexadecanoyl-sn-glycero-3-phospho-(1D-myo-inositol-5-phosphate) + GTP = 1,2-dihexadecanoyl-sn-glycero-3-phospho-(1D-myo-inositol-4,5-bisphosphate) + GDP + H(+). In terms of biological role, phosphatidylinositol 5-phosphate 4-kinase with low enzymatic activity. May be a GTP sensor, has higher GTP-dependent kinase activity than ATP-dependent kinase activity. In Danio rerio (Zebrafish), this protein is Phosphatidylinositol 5-phosphate 4-kinase type-2 gamma (pip4k2c).